A 75-amino-acid polypeptide reads, in one-letter code: Porwaprin-b (75 aa).

The N-terminal stretch at 1–24 (MSSGGLLLLLGLLTLWAELTPVSG) is a signal peptide. A WAP domain is found at 27 to 72 (RPVKPGLCPPRPQKPPCVKECKNDWSCRGEQKCCHYGCIYECRDPI). 4 cysteine pairs are disulfide-bonded: Cys-34-Cys-60, Cys-43-Cys-64, Cys-47-Cys-59, and Cys-53-Cys-68.

It belongs to the venom waprin family. In terms of tissue distribution, expressed by the venom gland.

Its subcellular location is the secreted. Its function is as follows. Damages membranes of susceptible bacteria. Has no hemolytic activity. Not toxic to mice. Does not inhibit the proteinases elastase and cathepsin G. In Pseudechis porphyriacus (Red-bellied black snake), this protein is Porwaprin-b.